Here is an 852-residue protein sequence, read N- to C-terminus: DNA mismatch repair protein MutS (852 aa).

Position 602-609 (602-609 (GPNMSGKS)) interacts with ATP.

Belongs to the DNA mismatch repair MutS family.

Its function is as follows. This protein is involved in the repair of mismatches in DNA. It is possible that it carries out the mismatch recognition step. This protein has a weak ATPase activity. The polypeptide is DNA mismatch repair protein MutS (Streptococcus thermophilus (strain ATCC BAA-250 / LMG 18311)).